Here is a 388-residue protein sequence, read N- to C-terminus: Succinate--CoA ligase [ADP-forming] subunit beta (388 aa).

Residues 9 to 244 (KQLFAEYGLP…PSQDDPREAH (236 aa)) form the ATP-grasp domain. Residues K46, 53–55 (GRG), E99, T102, and E107 each bind ATP. Mg(2+)-binding residues include N199 and D213. Residues N264 and 321–323 (GIV) contribute to the substrate site.

It belongs to the succinate/malate CoA ligase beta subunit family. Heterotetramer of two alpha and two beta subunits. Requires Mg(2+) as cofactor.

The catalysed reaction is succinate + ATP + CoA = succinyl-CoA + ADP + phosphate. It carries out the reaction GTP + succinate + CoA = succinyl-CoA + GDP + phosphate. It participates in carbohydrate metabolism; tricarboxylic acid cycle; succinate from succinyl-CoA (ligase route): step 1/1. In terms of biological role, succinyl-CoA synthetase functions in the citric acid cycle (TCA), coupling the hydrolysis of succinyl-CoA to the synthesis of either ATP or GTP and thus represents the only step of substrate-level phosphorylation in the TCA. The beta subunit provides nucleotide specificity of the enzyme and binds the substrate succinate, while the binding sites for coenzyme A and phosphate are found in the alpha subunit. The sequence is that of Succinate--CoA ligase [ADP-forming] subunit beta from Pseudomonas fluorescens (strain ATCC BAA-477 / NRRL B-23932 / Pf-5).